Reading from the N-terminus, the 517-residue chain is Recombining binding protein suppressor of hairless-like protein (517 aa).

Residues 26 to 37 (EMQLQSEADRRS) show a composition bias toward basic and acidic residues. The segment at 26 to 48 (EMQLQSEADRRSLPGTWTRSSPE) is disordered. DNA-binding stretches follow at residues 78–88 (QKSYGNEKRFF), 193–198 (SKPSQK), and 220–225 (RLRSQT). The region spanning 387–512 (LISTLELSGG…HQEFTRTNFH (126 aa)) is the IPT/TIG domain.

It belongs to the Su(H) family. As to quaternary structure, interacts weakly with EBNA2. Does not interact with any Notch proteins.

The protein resides in the nucleus. In terms of biological role, putative transcription factor, which cooperates with EBNA2 to activate transcription. This chain is Recombining binding protein suppressor of hairless-like protein (RBPJL), found in Homo sapiens (Human).